The following is a 224-amino-acid chain: Prolactin-3D1 (224 aa).

The first 29 residues, 1–29 (MQLTLNLSGSAGMQLLLLVSSLLLWENVS), serve as a signal peptide directing secretion. 2 cysteine pairs are disulfide-bonded: Cys-81–Cys-199 and Cys-216–Cys-224. Asn-109 and Asn-158 each carry an N-linked (GlcNAc...) asparagine glycan.

Belongs to the somatotropin/prolactin family.

It localises to the secreted. In Mus musculus (Mouse), this protein is Prolactin-3D1 (Prl3d1).